The chain runs to 123 residues: Small ribosomal subunit protein bS16 (123 aa).

Positions 87-123 (AKNNPIKAKPGKRAQERAAEKAQKAADAAAAAADAAE) are disordered. Basic and acidic residues predominate over residues 99 to 110 (RAQERAAEKAQK). Low complexity predominate over residues 111 to 123 (AADAAAAAADAAE).

This sequence belongs to the bacterial ribosomal protein bS16 family.

This Rhizobium etli (strain CIAT 652) protein is Small ribosomal subunit protein bS16.